The chain runs to 465 residues: Catalase cnsD (465 aa).

The active site involves H39. Heme is bound at residue Y331.

The protein belongs to the catalase family. Heme serves as cofactor.

It functions in the pathway alkaloid biosynthesis. Catalase; part of the gene cluster that mediates the biosynthesis of communesins, a prominent class of indole alkaloids with great potential as pharmaceuticals. Communesins are biosynthesized by the coupling of tryptamine and aurantioclavine, two building blocks derived from L-tryptophan. The L-tryptophan decarboxylase cnsB converts L-tryptophan to tryptamine, whereas the tryptophan dimethylallyltransferase cnsF converts L-tryptophan to 4-dimethylallyl tryptophan which is further transformed to aurantioclavine by the aurantioclavine synthase cnsA, probably aided by the catalase cnsD. The cytochrome P450 monooxygenase cnsC catalyzes the heterodimeric coupling between the two different indole moieties, tryptamine and aurantioclavine, to construct vicinal quaternary stereocenters and yield the heptacyclic communesin scaffold. The O-methyltransferase cnsE then methylates the communesin scaffold to produce communesin K, the simplest characterized communesin that contains the heptacyclic core. The dioxygenase cnsJ converts communesin K into communesin I. Acylation to introduce the hexadienyl group at position N16 of communesin I by the acyltransferase cnsK leads to the production of communesin B. The hexadienyl group is produced by the highly reducing polyketide synthase cnsI, before being hydrolytically removed from cnsI by the serine hydrolase cnsH, converted into hexadienyl-CoA by the CoA ligase cnsG, and then transferred to communesin I by cnsK. Surprisingly, cnsK may also be a promiscuous acyltransferase that can tolerate a range of acyl groups, including acetyl-, propionyl-, and butyryl-CoA, which lead to communesins A, G and H respectively. The roles of the alpha-ketoglutarate-dependent dioxygenases cnsM and cnsP have still to be determined. The protein is Catalase cnsD of Penicillium expansum (Blue mold rot fungus).